Here is a 325-residue protein sequence, read N- to C-terminus: Pyruvate dehydrogenase E1 component subunit beta (325 aa).

Glutamate 60 is a thiamine diphosphate binding site.

In terms of assembly, heterodimer of an alpha and a beta chain. Requires thiamine diphosphate as cofactor.

The catalysed reaction is N(6)-[(R)-lipoyl]-L-lysyl-[protein] + pyruvate + H(+) = N(6)-[(R)-S(8)-acetyldihydrolipoyl]-L-lysyl-[protein] + CO2. In terms of biological role, the pyruvate dehydrogenase complex catalyzes the overall conversion of pyruvate to acetyl-CoA and CO(2). It contains multiple copies of three enzymatic components: pyruvate dehydrogenase (E1), dihydrolipoamide acetyltransferase (E2) and lipoamide dehydrogenase (E3). This Geobacillus stearothermophilus (Bacillus stearothermophilus) protein is Pyruvate dehydrogenase E1 component subunit beta (pdhB).